Consider the following 336-residue polypeptide: MCNRQPKAVDLPPNYSCPHLLSFQSVEFNTNPTACDDVFCKRIESEKKYNDFLESLFKKYGRDTSDIADEVDLATGEIIVNNGHLEALKTKDDIWDPTFNNLEISASNGYEKKLDSSIGNPGEKAVSPVHIEDFQSPQIYKFKNLSLRDEMVSDCVFADEVPLASLFVENVCNETIPSQSCVRLKINDKTRKVDASALEKKSCLLPNSSGTLTDQRGLDTIKHKSIEQNEILHVISDTLSSPRRRNPLLSSPKTPLRRSFSKSKVRNSNSTKRRNFISLISMISPRPNLSTHHFNLGFQPLSQQTSFSGSSTQNPHSSSTCKKAFCFQCISESKKC.

The tract at residues 243 to 269 (RRRNPLLSSPKTPLRRSFSKSKVRNSN) is disordered. Residues 255–269 (PLRRSFSKSKVRNSN) are compositionally biased toward basic residues.

The protein localises to the cytoplasm. It is found in the nucleus. Its function is as follows. Centromeric protein that plays a central role in the incorporation and maintenance of histone H3-like variant CENPA at centromeres. In Schizosaccharomyces pombe (strain 972 / ATCC 24843) (Fission yeast), this protein is CENP-A histone chaperone scm3.